Consider the following 283-residue polypeptide: ATP phosphoribosyltransferase (283 aa).

The protein belongs to the ATP phosphoribosyltransferase family. Long subfamily. As to quaternary structure, equilibrium between an active dimeric form, an inactive hexameric form and higher aggregates. Interconversion between the various forms is largely reversible and is influenced by the natural substrates and inhibitors of the enzyme. Mg(2+) serves as cofactor.

The protein resides in the cytoplasm. The catalysed reaction is 1-(5-phospho-beta-D-ribosyl)-ATP + diphosphate = 5-phospho-alpha-D-ribose 1-diphosphate + ATP. Its pathway is amino-acid biosynthesis; L-histidine biosynthesis; L-histidine from 5-phospho-alpha-D-ribose 1-diphosphate: step 1/9. Its activity is regulated as follows. Feedback inhibited by histidine. Functionally, catalyzes the condensation of ATP and 5-phosphoribose 1-diphosphate to form N'-(5'-phosphoribosyl)-ATP (PR-ATP). Has a crucial role in the pathway because the rate of histidine biosynthesis seems to be controlled primarily by regulation of HisG enzymatic activity. The protein is ATP phosphoribosyltransferase of Mycobacterium sp. (strain JLS).